The sequence spans 542 residues: Tripartite motif-containing protein 26 (542 aa).

The RING-type zinc finger occupies 16-57 (CSICLDYLRDPVTIDCGHVFCRSCTSDIRPISGNRPVCPLCK). Residues 97–138 (QDMKLCERHQEKLHYYCEDDGKLLCVMCRESREHRPHTAVLV) form a B box-type zinc finger. Zn(2+) contacts are provided by Cys-102, His-105, Cys-124, and His-130. The stretch at 197–243 (QFLKKREQHLLDQLATLEQLLTEGREKFKTRGVSELDRLTLVISELE) forms a coiled coil. A B30.2/SPRY domain is found at 298-542 (RGLRQFQGKL…WPEARLLLRP (245 aa)). Residues 379–440 (REGWSEDEEE…EEEEEVQESC (62 aa)) form a disordered region. Composition is skewed to acidic residues over residues 383 to 405 (SEDE…EEPG) and 413 to 437 (WETD…EEVQ). Residues 411 to 440 (EDWETDEEDESLGEEEEEEEEEEEEVQESC) adopt a coiled-coil conformation.

Belongs to the TRIM/RBCC family. In terms of assembly, interacts with TBK1; this interaction bridges together TBK1 and NEMO in order to activate TBK1. Interacts with INCA1. In terms of processing, autoubiquitinates upon viral infection. In turn, autoubiquitinated TRIM26 recruits NEMO and bridges TBK1-NEMO interaction.

It is found in the cytoplasm. It localises to the nucleus. It catalyses the reaction S-ubiquitinyl-[E2 ubiquitin-conjugating enzyme]-L-cysteine + [acceptor protein]-L-lysine = [E2 ubiquitin-conjugating enzyme]-L-cysteine + N(6)-ubiquitinyl-[acceptor protein]-L-lysine.. In terms of biological role, E3 ubiquitin-protein ligase which regulates the IFN-beta production and antiviral response downstream of various DNA-encoded pattern-recognition receptors (PRRs). Also plays a central role in determining the response to different forms of oxidative stress by controlling levels of DNA glycosylases NEIL1, NEIL3 and NTH1 that are involved in repair of damaged DNA. Promotes nuclear IRF3 ubiquitination and proteasomal degradation. Bridges together TBK1 and NEMO during the innate response to viral infection leading to the activation of TBK1. Positively regulates LPS-mediated inflammatory innate immune response by catalyzing the 'Lys-11'-linked polyubiquitination of TAB1 to enhance its activation and subsequent NF-kappa-B and MAPK signaling. In a manner independent of its catalytic activity, inhibits WWP2, a SOX2-directed E3 ubiquitin ligase, and thus protects SOX2 from polyubiquitination and proteasomal degradation. Ubiquitinates the histone acetyltransferase protein complex component PHF20 and thereby triggers its degradation in the nucleus after its recruitment by the histone demethylase KDM6B, serving as a scaffold protein. Upon induction by TGF-beta, ubiquitinates the TFIID component TAF7 for proteasomal degradation. Induces ferroptosis by ubiquitinating SLC7A11, a critical protein for lipid reactive oxygen species (ROS) scavenging. This Rattus norvegicus (Rat) protein is Tripartite motif-containing protein 26 (Trim26).